The sequence spans 347 residues: Quinolinate synthase (347 aa).

Positions 47 and 68 each coordinate iminosuccinate. Cys-113 provides a ligand contact to [4Fe-4S] cluster. Iminosuccinate contacts are provided by residues 139-141 and Ser-156; that span reads YAN. Position 200 (Cys-200) interacts with [4Fe-4S] cluster. Residues 226 to 228 and Thr-243 each bind iminosuccinate; that span reads HPE. Cys-297 is a binding site for [4Fe-4S] cluster.

The protein belongs to the quinolinate synthase family. Type 1 subfamily. [4Fe-4S] cluster serves as cofactor.

It is found in the cytoplasm. It carries out the reaction iminosuccinate + dihydroxyacetone phosphate = quinolinate + phosphate + 2 H2O + H(+). It participates in cofactor biosynthesis; NAD(+) biosynthesis; quinolinate from iminoaspartate: step 1/1. Catalyzes the condensation of iminoaspartate with dihydroxyacetone phosphate to form quinolinate. The chain is Quinolinate synthase from Shigella dysenteriae serotype 1 (strain Sd197).